The following is a 54-amino-acid chain: Small ribosomal subunit protein uS14 (54 aa).

Zn(2+) is bound by residues Cys19, Cys22, Cys37, and Cys40.

The protein belongs to the universal ribosomal protein uS14 family. Zinc-binding uS14 subfamily. In terms of assembly, part of the 30S ribosomal subunit. The cofactor is Zn(2+).

Its function is as follows. Binds 16S rRNA, required for the assembly of 30S particles. The protein is Small ribosomal subunit protein uS14 of Sulfurisphaera tokodaii (strain DSM 16993 / JCM 10545 / NBRC 100140 / 7) (Sulfolobus tokodaii).